Here is a 286-residue protein sequence, read N- to C-terminus: 33 kDa chaperonin (286 aa).

Intrachain disulfides connect cysteine 225–cysteine 227 and cysteine 258–cysteine 261.

The protein belongs to the HSP33 family. Post-translationally, under oxidizing conditions two disulfide bonds are formed involving the reactive cysteines. Under reducing conditions zinc is bound to the reactive cysteines and the protein is inactive.

It localises to the cytoplasm. Functionally, redox regulated molecular chaperone. Protects both thermally unfolding and oxidatively damaged proteins from irreversible aggregation. Plays an important role in the bacterial defense system toward oxidative stress. The sequence is that of 33 kDa chaperonin from Shewanella sediminis (strain HAW-EB3).